Consider the following 1041-residue polypeptide: Leucine-rich repeat receptor-like protein kinase TDR (1041 aa).

Positions 1 to 29 (MKKKNISPSLVLHPLLLLLLPFFAFNSLA) are cleaved as a signal peptide. Topologically, residues 30 to 652 (LKFSPQLLSL…HHKEERPKKT (623 aa)) are extracellular. A disulfide bridge connects residues C69 and C76. Residues N78, N92, and N111 are each glycosylated (N-linked (GlcNAc...) asparagine). 21 LRR repeats span residues 80-104 (TAQV…IRYL), 105-128 (SSLL…IFDL), 130-152 (KLTT…ISKL), 154-176 (FLKV…VSRL), 177-199 (RFLE…AYGG), 200-224 (LQRL…LGLL), 225-248 (TELQ…FALL), 250-272 (NLKY…LGNL), 273-296 (SNLE…YSNL), 297-319 (KSLK…GFST), 321-344 (KNLT…IGEL), 345-368 (PELT…LGSN), 369-392 (GKLE…LCHG), 394-416 (KLYK…LTRC), 418-439 (SLWR…GFGS), 440-464 (LRNL…FATA), 466-488 (VLQY…IWKA), 511-535 (CKSF…IGHC), 536-558 (EKLL…EIST), 559-583 (LPSI…FGSS), and 585-607 (TITT…SFAH). Residues 186–188 (GSY) form a CLE peptide binding region. The CLE peptide binding stretch occupies residues 233-235 (GYN). N-linked (GlcNAc...) asparagine glycans are attached at residues N258 and N271. The CLE peptide binding stretch occupies residues 303–307 (DFSSN). N-linked (GlcNAc...) asparagine glycosylation is found at N322, N332, and N356. The interval 375–377 (DVS) is CLE peptide binding. N378 carries an N-linked (GlcNAc...) asparagine glycan. Residues C390 and C416 are joined by a disulfide bond. The interval 421–423 (RFR) is CLE peptide binding. Residues N430, N442, N471, N525, and N542 are each glycosylated (N-linked (GlcNAc...) asparagine). C511 and C535 are disulfide-bonded. The N-linked (GlcNAc...) asparagine glycan is linked to N590. A disulfide bond links C620 and C628. The helical transmembrane segment at 653 to 673 (AGAIVWILAAAIGVGFFVLVA) threads the bilayer. Topologically, residues 674–1041 (ATRCFQKSYG…HDVKCQRIGV (368 aa)) are cytoplasmic. Residue T710 is modified to Phosphothreonine. Positions 719-1001 (SKTDNILGMG…DVLLILQEAK (283 aa)) constitute a Protein kinase domain. ATP-binding positions include 725–733 (LGMGSTGTV) and K747. Y798 and Y839 each carry phosphotyrosine. D852 functions as the Proton acceptor in the catalytic mechanism. The residue at position 884 (S884) is a Phosphoserine. Residues Y892 and Y899 each carry the phosphotyrosine modification. Position 900 is a phosphothreonine (T900).

The protein belongs to the protein kinase superfamily. Ser/Thr protein kinase family. In terms of assembly, interacts specifically with the mature peptides CLE41p and CLE44p, especially in the presence of SERK2. Interacts with LURE1.2. In terms of tissue distribution, widely expressed along the vascular strands. In roots and hypocotyls, confined to procambial cells.

It localises to the cell membrane. It carries out the reaction L-seryl-[protein] + ATP = O-phospho-L-seryl-[protein] + ADP + H(+). The enzyme catalyses L-threonyl-[protein] + ATP = O-phospho-L-threonyl-[protein] + ADP + H(+). Its function is as follows. Acts with CLE41p and CLE44p peptides as a ligand-receptor pair in a signal transduction pathway involved in the regulation of procambium maintenance and polarity during vascular-tissue development. Mediates repression of tracheary element differentiation and the promotion of procambial cells formation and polar division adjacent to phloem cells in the veins. This chain is Leucine-rich repeat receptor-like protein kinase TDR, found in Arabidopsis thaliana (Mouse-ear cress).